Here is a 326-residue protein sequence, read N- to C-terminus: Phospho-N-acetylmuramoyl-pentapeptide-transferase (326 aa).

Helical transmembrane passes span 3–23 (ISIS…PAFI), 51–71 (TMGG…VALF), 79–99 (VGMI…DDFL), 115–135 (LALQ…GGDM), 138–158 (IFGY…FWLV), 169–189 (GIDG…GVIA), 195–215 (MDIL…FVFN), 221–243 (VFMG…MALH), and 304–324 (VDFF…AILY).

Belongs to the glycosyltransferase 4 family. MraY subfamily. Mg(2+) serves as cofactor.

The protein resides in the cell membrane. The catalysed reaction is UDP-N-acetyl-alpha-D-muramoyl-L-alanyl-gamma-D-glutamyl-L-lysyl-D-alanyl-D-alanine + di-trans,octa-cis-undecaprenyl phosphate = Mur2Ac(oyl-L-Ala-gamma-D-Glu-L-Lys-D-Ala-D-Ala)-di-trans,octa-cis-undecaprenyl diphosphate + UMP. Its pathway is cell wall biogenesis; peptidoglycan biosynthesis. Catalyzes the initial step of the lipid cycle reactions in the biosynthesis of the cell wall peptidoglycan: transfers peptidoglycan precursor phospho-MurNAc-pentapeptide from UDP-MurNAc-pentapeptide onto the lipid carrier undecaprenyl phosphate, yielding undecaprenyl-pyrophosphoryl-MurNAc-pentapeptide, known as lipid I. The chain is Phospho-N-acetylmuramoyl-pentapeptide-transferase from Streptococcus pneumoniae (strain Hungary19A-6).